A 376-amino-acid polypeptide reads, in one-letter code: tRNA 2-selenouridine synthase (376 aa).

The Rhodanese domain maps to 15 to 138; sequence FVAGKPLIDL…MRQYLIGVIE (124 aa). Cys-98 functions as the S-selanylcysteine intermediate in the catalytic mechanism.

Belongs to the SelU family. In terms of assembly, monomer.

The enzyme catalyses 5-methylaminomethyl-2-thiouridine(34) in tRNA + selenophosphate + (2E)-geranyl diphosphate + H2O + H(+) = 5-methylaminomethyl-2-selenouridine(34) in tRNA + (2E)-thiogeraniol + phosphate + diphosphate. It carries out the reaction 5-methylaminomethyl-2-thiouridine(34) in tRNA + (2E)-geranyl diphosphate = 5-methylaminomethyl-S-(2E)-geranyl-thiouridine(34) in tRNA + diphosphate. It catalyses the reaction 5-methylaminomethyl-S-(2E)-geranyl-thiouridine(34) in tRNA + selenophosphate + H(+) = 5-methylaminomethyl-2-(Se-phospho)selenouridine(34) in tRNA + (2E)-thiogeraniol. The catalysed reaction is 5-methylaminomethyl-2-(Se-phospho)selenouridine(34) in tRNA + H2O = 5-methylaminomethyl-2-selenouridine(34) in tRNA + phosphate. In terms of biological role, involved in the post-transcriptional modification of the uridine at the wobble position (U34) of tRNA(Lys), tRNA(Glu) and tRNA(Gln). Catalyzes the conversion of 2-thiouridine (S2U-RNA) to 2-selenouridine (Se2U-RNA). Acts in a two-step process involving geranylation of 2-thiouridine (S2U) to S-geranyl-2-thiouridine (geS2U) and subsequent selenation of the latter derivative to 2-selenouridine (Se2U) in the tRNA chain. This is tRNA 2-selenouridine synthase from Shewanella oneidensis (strain ATCC 700550 / JCM 31522 / CIP 106686 / LMG 19005 / NCIMB 14063 / MR-1).